Consider the following 222-residue polypeptide: Ribosomal RNA small subunit methyltransferase G (222 aa).

S-adenosyl-L-methionine is bound by residues Gly82, Leu87, 132–133 (AE), and Arg150.

The protein belongs to the methyltransferase superfamily. RNA methyltransferase RsmG family.

The protein resides in the cytoplasm. In terms of biological role, specifically methylates the N7 position of guanine in position 518 of 16S rRNA. The sequence is that of Ribosomal RNA small subunit methyltransferase G from Corynebacterium jeikeium (strain K411).